The primary structure comprises 419 residues: UDP-N-acetylglucosamine 1-carboxyvinyltransferase (419 aa).

A phosphoenolpyruvate-binding site is contributed by 22-23 (KN). UDP-N-acetyl-alpha-D-glucosamine is bound at residue arginine 92. Cysteine 116 serves as the catalytic Proton donor. The residue at position 116 (cysteine 116) is a 2-(S-cysteinyl)pyruvic acid O-phosphothioketal. Residues 121-125 (RPVDQ), aspartate 306, and isoleucine 328 contribute to the UDP-N-acetyl-alpha-D-glucosamine site.

This sequence belongs to the EPSP synthase family. MurA subfamily.

The protein localises to the cytoplasm. The enzyme catalyses phosphoenolpyruvate + UDP-N-acetyl-alpha-D-glucosamine = UDP-N-acetyl-3-O-(1-carboxyvinyl)-alpha-D-glucosamine + phosphate. It participates in cell wall biogenesis; peptidoglycan biosynthesis. In terms of biological role, cell wall formation. Adds enolpyruvyl to UDP-N-acetylglucosamine. Target for the antibiotic phosphomycin. The protein is UDP-N-acetylglucosamine 1-carboxyvinyltransferase of Acinetobacter guillouiae (Acinetobacter genomosp. 11).